Reading from the N-terminus, the 314-residue chain is Olfactory receptor 11H7 (314 aa).

Over 1–24 (MNNSQISTVTQFVLLGFPGPWKIQ) the chain is Extracellular. The N-linked (GlcNAc...) asparagine glycan is linked to N2. The helical transmembrane segment at 25 to 45 (IIFFSMILLVYIFTLTGNMAI) threads the bilayer. Residues 46 to 57 (ICAVRWDHRLHT) are Cytoplasmic-facing. The chain crosses the membrane as a helical span at residues 58 to 78 (PMYVLLANFSFLEIWYVTCTV). Residues 79–97 (PNMLVNFFSKTKTISFSGC) are Extracellular-facing. Residues C97 and C179 are joined by a disulfide bond. Residues 98-118 (FTQFHFFFSLGTTECFFLCVM) form a helical membrane-spanning segment. The Cytoplasmic portion of the chain corresponds to 119-142 (AYDRYLAICHPLHYPSIMTGQLCG). Residues 143-163 (ILVSLCWLIGFLGHSISIFFI) traverse the membrane as a helical segment. Residues 164–201 (FQLPFCGPNIIDHFLCDVDPLMALSSAPTHIIGHVFHS) lie on the Extracellular side of the membrane. A helical transmembrane segment spans residues 202 to 222 (VSSLFINLTMVYILGSYTLVL). Topologically, residues 223–244 (RTVLQVPSSAGWQKAISTCGSH) are cytoplasmic. A helical membrane pass occupies residues 245–265 (LVVVSLFYGAIMLMYVSPTPG). Topologically, residues 266 to 271 (NSVAMH) are extracellular. The helical transmembrane segment at 272 to 292 (KLITLIYSVVTPVLNPLIYSL) threads the bilayer. Residues 293–314 (RNKDMKYALHHVFCGMRIIQRS) lie on the Cytoplasmic side of the membrane.

It belongs to the G-protein coupled receptor 1 family.

The protein resides in the cell membrane. Functionally, odorant receptor. Activated by isovaleric acid. The polypeptide is Olfactory receptor 11H7 (OR11H7) (Homo sapiens (Human)).